A 546-amino-acid chain; its full sequence is CTP synthase (546 aa).

The tract at residues 1–266 (MTTNYIFVTG…DELVCKRFGI (266 aa)) is amidoligase domain. Residue Ser14 participates in CTP binding. Ser14 is a UTP binding site. ATP is bound by residues 15–20 (SLGKGI) and Asp72. The Mg(2+) site is built by Asp72 and Glu140. CTP contacts are provided by residues 147 to 149 (DIE), 187 to 192 (KTKPTQ), and Lys223. UTP-binding positions include 187–192 (KTKPTQ) and Lys223. Position 239–241 (239–241 (RDV)) interacts with ATP. One can recognise a Glutamine amidotransferase type-1 domain in the interval 291–542 (TIGMVGKYIE…VKAAGEFQRG (252 aa)). An L-glutamine-binding site is contributed by Gly352. The active-site Nucleophile; for glutamine hydrolysis is the Cys379. L-glutamine is bound by residues 380-383 (LGMQ), Glu403, and Arg470. Active-site residues include His515 and Glu517.

The protein belongs to the CTP synthase family. Homotetramer.

The enzyme catalyses UTP + L-glutamine + ATP + H2O = CTP + L-glutamate + ADP + phosphate + 2 H(+). It carries out the reaction L-glutamine + H2O = L-glutamate + NH4(+). It catalyses the reaction UTP + NH4(+) + ATP = CTP + ADP + phosphate + 2 H(+). It participates in pyrimidine metabolism; CTP biosynthesis via de novo pathway; CTP from UDP: step 2/2. Allosterically activated by GTP, when glutamine is the substrate; GTP has no effect on the reaction when ammonia is the substrate. The allosteric effector GTP functions by stabilizing the protein conformation that binds the tetrahedral intermediate(s) formed during glutamine hydrolysis. Inhibited by the product CTP, via allosteric rather than competitive inhibition. Its function is as follows. Catalyzes the ATP-dependent amination of UTP to CTP with either L-glutamine or ammonia as the source of nitrogen. Regulates intracellular CTP levels through interactions with the four ribonucleotide triphosphates. In Vibrio atlanticus (strain LGP32) (Vibrio splendidus (strain Mel32)), this protein is CTP synthase.